A 124-amino-acid polypeptide reads, in one-letter code: Ribonuclease P protein subunit p14 (124 aa).

This sequence belongs to the eukaryotic/archaeal RNase P protein component 2 family. As to quaternary structure, RNase P consists of a catalytic RNA moiety and about 10 protein subunits; POP1, POP4, POP5, POP7, RPP14, RPP21, RPP25, RPP30, RPP38 and RPP40. Within the RNase P complex, POP1, POP7 and RPP25 form the 'finger' subcomplex, POP5, RPP14, RPP40 and homodimeric RPP30 form the 'palm' subcomplex, and RPP21, POP4 and RPP38 form the 'wrist' subcomplex. All subunits of the RNase P complex interact with the catalytic RNA.

The protein resides in the nucleus. It is found in the nucleolus. Its function is as follows. Component of ribonuclease P, a ribonucleoprotein complex that generates mature tRNA molecules by cleaving their 5'-ends. The protein is Ribonuclease P protein subunit p14 (RPP14) of Homo sapiens (Human).